We begin with the raw amino-acid sequence, 266 residues long: Undecaprenyl-diphosphatase (266 aa).

8 consecutive transmembrane segments (helical) span residues methionine 1–isoleucine 21, proline 39–phenylalanine 59, isoleucine 87–glycine 107, leucine 117–threonine 137, tyrosine 153–isoleucine 173, phenylalanine 189–alanine 209, phenylalanine 216–isoleucine 236, and histidine 246–leucine 266.

Belongs to the UppP family.

The protein localises to the cell inner membrane. It catalyses the reaction di-trans,octa-cis-undecaprenyl diphosphate + H2O = di-trans,octa-cis-undecaprenyl phosphate + phosphate + H(+). Its function is as follows. Catalyzes the dephosphorylation of undecaprenyl diphosphate (UPP). Confers resistance to bacitracin. This Prochlorococcus marinus subsp. pastoris (strain CCMP1986 / NIES-2087 / MED4) protein is Undecaprenyl-diphosphatase.